The sequence spans 475 residues: Ribulose bisphosphate carboxylase large chain (475 aa).

Residues 1–2 constitute a propeptide that is removed on maturation; it reads MS. Proline 3 bears the N-acetylproline mark. N6,N6,N6-trimethyllysine is present on lysine 14. Substrate contacts are provided by asparagine 123 and threonine 173. Lysine 175 acts as the Proton acceptor in catalysis. Lysine 177 is a binding site for substrate. 3 residues coordinate Mg(2+): lysine 201, aspartate 203, and glutamate 204. Lysine 201 is modified (N6-carboxylysine). Histidine 294 serves as the catalytic Proton acceptor. The substrate site is built by arginine 295, histidine 327, and serine 379.

It belongs to the RuBisCO large chain family. Type I subfamily. Heterohexadecamer of 8 large chains and 8 small chains; disulfide-linked. The disulfide link is formed within the large subunit homodimers. Mg(2+) serves as cofactor. Post-translationally, the disulfide bond which can form in the large chain dimeric partners within the hexadecamer appears to be associated with oxidative stress and protein turnover.

It is found in the plastid. The protein localises to the chloroplast. The enzyme catalyses 2 (2R)-3-phosphoglycerate + 2 H(+) = D-ribulose 1,5-bisphosphate + CO2 + H2O. It catalyses the reaction D-ribulose 1,5-bisphosphate + O2 = 2-phosphoglycolate + (2R)-3-phosphoglycerate + 2 H(+). RuBisCO catalyzes two reactions: the carboxylation of D-ribulose 1,5-bisphosphate, the primary event in carbon dioxide fixation, as well as the oxidative fragmentation of the pentose substrate in the photorespiration process. Both reactions occur simultaneously and in competition at the same active site. The chain is Ribulose bisphosphate carboxylase large chain from Picea abies (Norway spruce).